The chain runs to 752 residues: DNA topoisomerase 4 subunit A (752 aa).

Residues 31-494 (LPFIGDGLKP…EAKAMSEHDM (464 aa)) form the Topo IIA-type catalytic domain. The O-(5'-phospho-DNA)-tyrosine intermediate role is filled by tyrosine 120. 2 disordered regions span residues 472–492 (YGDD…MSEH) and 718–752 (TGER…DSEE). Basic and acidic residues-rich tracts occupy residues 473-492 (GDDR…MSEH) and 732-743 (QRIDRVEIDSPR).

Belongs to the type II topoisomerase GyrA/ParC subunit family. ParC type 1 subfamily. In terms of assembly, heterotetramer composed of ParC and ParE.

The protein resides in the cell membrane. The enzyme catalyses ATP-dependent breakage, passage and rejoining of double-stranded DNA.. Topoisomerase IV is essential for chromosome segregation. It relaxes supercoiled DNA. Performs the decatenation events required during the replication of a circular DNA molecule. This Escherichia coli O157:H7 protein is DNA topoisomerase 4 subunit A.